The primary structure comprises 43 residues: Delta-actitoxin-Bca1a (43 aa).

3 disulfide bridges follow: C1–C41, C3–C31, and C24–C42.

The protein resides in the secreted. It is found in the nematocyst. In terms of biological role, binds specifically to voltage-gated sodium channels (Nav), thereby delaying their inactivation during signal transduction. Thus it strongly stimulates mammalian cardiac muscle contraction. This is Delta-actitoxin-Bca1a from Bunodosoma capense (Knobbly sea anemone).